Here is a 229-residue protein sequence, read N- to C-terminus: tRNA (guanine-N(1)-)-methyltransferase (229 aa).

S-adenosyl-L-methionine is bound by residues Gly109 and 129–134; that span reads IGDFIL.

This sequence belongs to the RNA methyltransferase TrmD family. As to quaternary structure, homodimer.

It localises to the cytoplasm. It carries out the reaction guanosine(37) in tRNA + S-adenosyl-L-methionine = N(1)-methylguanosine(37) in tRNA + S-adenosyl-L-homocysteine + H(+). Its function is as follows. Specifically methylates guanosine-37 in various tRNAs. The protein is tRNA (guanine-N(1)-)-methyltransferase of Helicobacter pylori (strain Shi470).